The following is a 158-amino-acid chain: NADPH-dependent 7-cyano-7-deazaguanine reductase (158 aa).

The active-site Thioimide intermediate is C56. The active-site Proton donor is D63. Residues V78 to S80 and H97 to E98 each bind substrate.

It belongs to the GTP cyclohydrolase I family. QueF type 1 subfamily.

The protein localises to the cytoplasm. It carries out the reaction 7-aminomethyl-7-carbaguanine + 2 NADP(+) = 7-cyano-7-deazaguanine + 2 NADPH + 3 H(+). It functions in the pathway tRNA modification; tRNA-queuosine biosynthesis. Its function is as follows. Catalyzes the NADPH-dependent reduction of 7-cyano-7-deazaguanine (preQ0) to 7-aminomethyl-7-deazaguanine (preQ1). The chain is NADPH-dependent 7-cyano-7-deazaguanine reductase from Rhodopseudomonas palustris (strain HaA2).